We begin with the raw amino-acid sequence, 384 residues long: Chaperone protein DnaJ (384 aa).

The J domain maps to 5-70 (DFYEVLGVSK…DKKAAYDRYG (66 aa)). The segment at 143–221 (GAQKTITVPG…CHGSGRIEKE (79 aa)) adopts a CR-type zinc-finger fold. Zn(2+) is bound by residues Cys-156, Cys-159, Cys-173, Cys-176, Cys-195, Cys-198, Cys-209, and Cys-212. CXXCXGXG motif repeat units lie at residues 156–163 (CGSCNGTG), 173–180 (CPTCSGLG), 195–202 (CPTCGGQG), and 209–216 (CRVCHGSG).

This sequence belongs to the DnaJ family. As to quaternary structure, homodimer. Zn(2+) serves as cofactor.

The protein localises to the cytoplasm. In terms of biological role, participates actively in the response to hyperosmotic and heat shock by preventing the aggregation of stress-denatured proteins and by disaggregating proteins, also in an autonomous, DnaK-independent fashion. Unfolded proteins bind initially to DnaJ; upon interaction with the DnaJ-bound protein, DnaK hydrolyzes its bound ATP, resulting in the formation of a stable complex. GrpE releases ADP from DnaK; ATP binding to DnaK triggers the release of the substrate protein, thus completing the reaction cycle. Several rounds of ATP-dependent interactions between DnaJ, DnaK and GrpE are required for fully efficient folding. Also involved, together with DnaK and GrpE, in the DNA replication of plasmids through activation of initiation proteins. The protein is Chaperone protein DnaJ of Rhodobacter capsulatus (Rhodopseudomonas capsulata).